The chain runs to 272 residues: Dermonecrotic toxin SpeSicTox-betaIB2a (272 aa).

Residue H5 is part of the active site. Residues E25 and D27 each coordinate Mg(2+). The active-site Nucleophile is the H41. 2 disulfide bridges follow: C45–C51 and C47–C191. Position 85 (D85) interacts with Mg(2+).

This sequence belongs to the arthropod phospholipase D family. Class II subfamily. The cofactor is Mg(2+). In terms of tissue distribution, expressed by the venom gland.

Its subcellular location is the secreted. The enzyme catalyses an N-(acyl)-sphingosylphosphocholine = an N-(acyl)-sphingosyl-1,3-cyclic phosphate + choline. It carries out the reaction an N-(acyl)-sphingosylphosphoethanolamine = an N-(acyl)-sphingosyl-1,3-cyclic phosphate + ethanolamine. The catalysed reaction is a 1-acyl-sn-glycero-3-phosphocholine = a 1-acyl-sn-glycero-2,3-cyclic phosphate + choline. It catalyses the reaction a 1-acyl-sn-glycero-3-phosphoethanolamine = a 1-acyl-sn-glycero-2,3-cyclic phosphate + ethanolamine. Functionally, dermonecrotic toxins cleave the phosphodiester linkage between the phosphate and headgroup of certain phospholipids (sphingolipid and lysolipid substrates), forming an alcohol (often choline) and a cyclic phosphate. This toxin acts on sphingomyelin (SM). It may also act on ceramide phosphoethanolamine (CPE), lysophosphatidylcholine (LPC) and lysophosphatidylethanolamine (LPE), but not on lysophosphatidylserine (LPS), and lysophosphatidylglycerol (LPG). It acts by transphosphatidylation, releasing exclusively cyclic phosphate products as second products. Induces dermonecrosis, hemolysis, increased vascular permeability, edema, inflammatory response, and platelet aggregation. In Sicarius peruensis (Six-eyed sand spider), this protein is Dermonecrotic toxin SpeSicTox-betaIB2a.